The chain runs to 202 residues: Dephospho-CoA kinase (202 aa).

The DPCK domain occupies 3-202 (TIGITGGIGS…TKRPNPPDRL (200 aa)). An ATP-binding site is contributed by 11-16 (GSGKSV). The disordered stretch occupies residues 138–161 (RAMARDGSSAETMRQRMLSQEREQ).

The protein belongs to the CoaE family.

The protein resides in the cytoplasm. The enzyme catalyses 3'-dephospho-CoA + ATP = ADP + CoA + H(+). Its pathway is cofactor biosynthesis; coenzyme A biosynthesis; CoA from (R)-pantothenate: step 5/5. Functionally, catalyzes the phosphorylation of the 3'-hydroxyl group of dephosphocoenzyme A to form coenzyme A. The sequence is that of Dephospho-CoA kinase from Porphyromonas gingivalis (strain ATCC BAA-308 / W83).